The chain runs to 638 residues: Threonine--tRNA ligase (638 aa).

In terms of domain architecture, TGS spans 1 to 61 (MPIITLPDGS…NKDSKVVIIT (61 aa)). Positions 242 to 533 (DHRKLGKKHS…LIEQYEAKFP (292 aa)) are catalytic. 3 residues coordinate Zn(2+): Cys333, His384, and His510.

The protein belongs to the class-II aminoacyl-tRNA synthetase family. Homodimer. Zn(2+) serves as cofactor.

The protein resides in the cytoplasm. The enzyme catalyses tRNA(Thr) + L-threonine + ATP = L-threonyl-tRNA(Thr) + AMP + diphosphate + H(+). Functionally, catalyzes the attachment of threonine to tRNA(Thr) in a two-step reaction: L-threonine is first activated by ATP to form Thr-AMP and then transferred to the acceptor end of tRNA(Thr). Also edits incorrectly charged L-seryl-tRNA(Thr). The polypeptide is Threonine--tRNA ligase (Prochlorococcus marinus (strain MIT 9301)).